Reading from the N-terminus, the 932-residue chain is AP-3 complex subunit delta (932 aa).

Thr-2 carries the N-acetylthreonine modification. HEAT repeat units follow at residues 157-194 (SLAR…QYPE), 196-231 (LRDN…KNPQ), 233-269 (FIQL…VEPK), 270-307 (LRAK…LEED), 310-346 (ETAM…KINT), 347-384 (DFIS…EDNL), 386-425 (AIVQ…ENYK), 427-466 (KMVN…DISD), 490-527 (VTIA…TLVE), 528-564 (NGND…NWCN), 570-601 (KRFE…ERSV), and 602-638 (EVLE…AYEL). Ser-700 and Ser-727 each carry phosphoserine. A disordered region spans residues 720–868 (EREKERMSNP…EEGNLRKEDE (149 aa)). Basic and acidic residues-rich tracts occupy residues 738-747 (ERTKNSKDLL) and 755-766 (SDKKPETIRLNR). Thr-767 bears the Phosphothreonine mark. Positions 767 to 779 (TDNSLNSLSLSTT) are enriched in low complexity. Phosphoserine is present on residues Ser-770 and Ser-773. Basic residues predominate over residues 783–793 (RKKKKGKKKNR). A Phosphoserine modification is found at Ser-798. The segment covering 806 to 832 (APKRKDAFQKPHDNHSTQNPLKKDKIN) has biased composition (basic and acidic residues). Positions 838–855 (QLENFDFSNFGQSSNAGR) are enriched in polar residues. Over residues 857–868 (SQEEGNLRKEDE) the composition is skewed to basic and acidic residues. Residues 858-878 (QEEGNLRKEDELELSRLEANL) adopt a coiled-coil conformation. Phosphoserine is present on Ser-888. Over residues 897-915 (KKKKKGKKSKSKNKLKTKA) the composition is skewed to basic residues. Residues 897-932 (KKKKKGKKSKSKNKLKTKAKNSPEPNEFLRDQSTDI) form a disordered region. The residue at position 918 (Ser-918) is a Phosphoserine. Residues 923–932 (EFLRDQSTDI) show a composition bias toward basic and acidic residues.

The protein belongs to the adaptor complexes large subunit family. In terms of assembly, adaptor protein complex 3 (AP-3) is a heterotetramer composed of 2 large adaptins (APL5 and APL6), a medium adaptin (APM3) and a small adaptin (APS3). Interacts with VPS41.

Its subcellular location is the golgi apparatus. It localises to the cytoplasmic vesicle. The protein localises to the clathrin-coated vesicle membrane. Functionally, part of the AP-3 complex, an adaptor-related complex which is not clathrin-associated. The complex is associated with the Golgi region as well as more peripheral structures. It facilitates the budding of vesicles from the Golgi membrane and may be directly involved in trafficking to the vacuole. Required for the transport via the ALP pathway, which directs the transport of the cargo proteins PHO8 and VAM3 to the vacuole. The chain is AP-3 complex subunit delta (APL5) from Saccharomyces cerevisiae (strain ATCC 204508 / S288c) (Baker's yeast).